The following is a 509-amino-acid chain: Photosystem II CP47 reaction center protein (509 aa).

The next 6 helical transmembrane spans lie at 21 to 36, 101 to 115, 140 to 156, 203 to 218, 237 to 252, and 457 to 472; these read AVHL…WAGS, IILS…IWHW, GIHL…FGAF, IAAG…FHLT, VLSS…AFVT, and NFAL…HGGR.

Belongs to the PsbB/PsbC family. PsbB subfamily. In terms of assembly, PSII is composed of 1 copy each of membrane proteins PsbA, PsbB, PsbC, PsbD, PsbE, PsbF, PsbH, PsbI, PsbJ, PsbK, PsbL, PsbM, PsbT, PsbX, PsbY, PsbZ, Psb30/Ycf12, at least 3 peripheral proteins of the oxygen-evolving complex and a large number of cofactors. It forms dimeric complexes. Binds multiple chlorophylls. PSII binds additional chlorophylls, carotenoids and specific lipids. serves as cofactor.

Its subcellular location is the plastid. The protein localises to the chloroplast thylakoid membrane. Its function is as follows. One of the components of the core complex of photosystem II (PSII). It binds chlorophyll and helps catalyze the primary light-induced photochemical processes of PSII. PSII is a light-driven water:plastoquinone oxidoreductase, using light energy to abstract electrons from H(2)O, generating O(2) and a proton gradient subsequently used for ATP formation. This is Photosystem II CP47 reaction center protein from Trieres chinensis (Marine centric diatom).